Reading from the N-terminus, the 241-residue chain is Phosphoadenosine 5'-phosphosulfate reductase (241 aa).

Residue Cys-235 is the Nucleophile; cysteine thiosulfonate intermediate of the active site.

The protein belongs to the PAPS reductase family. CysH subfamily.

The protein localises to the cytoplasm. The enzyme catalyses [thioredoxin]-disulfide + sulfite + adenosine 3',5'-bisphosphate + 2 H(+) = [thioredoxin]-dithiol + 3'-phosphoadenylyl sulfate. The protein operates within sulfur metabolism; hydrogen sulfide biosynthesis; sulfite from sulfate: step 3/3. Catalyzes the formation of sulfite from phosphoadenosine 5'-phosphosulfate (PAPS) using thioredoxin as an electron donor. This chain is Phosphoadenosine 5'-phosphosulfate reductase, found in Xanthomonas euvesicatoria pv. vesicatoria (strain 85-10) (Xanthomonas campestris pv. vesicatoria).